A 185-amino-acid chain; its full sequence is Ribosome-recycling factor (185 aa).

It belongs to the RRF family.

It is found in the cytoplasm. Responsible for the release of ribosomes from messenger RNA at the termination of protein biosynthesis. May increase the efficiency of translation by recycling ribosomes from one round of translation to another. The protein is Ribosome-recycling factor of Streptococcus gordonii (strain Challis / ATCC 35105 / BCRC 15272 / CH1 / DL1 / V288).